The following is a 326-amino-acid chain: Glyoxylate/hydroxypyruvate reductase B (326 aa).

Catalysis depends on residues Arg237 and Glu266. The active-site Proton donor is His285.

Belongs to the D-isomer specific 2-hydroxyacid dehydrogenase family. GhrB subfamily. In terms of assembly, homodimer.

It is found in the cytoplasm. The enzyme catalyses glycolate + NADP(+) = glyoxylate + NADPH + H(+). The catalysed reaction is (R)-glycerate + NAD(+) = 3-hydroxypyruvate + NADH + H(+). It catalyses the reaction (R)-glycerate + NADP(+) = 3-hydroxypyruvate + NADPH + H(+). Catalyzes the NADPH-dependent reduction of glyoxylate and hydroxypyruvate into glycolate and glycerate, respectively. This is Glyoxylate/hydroxypyruvate reductase B from Yersinia pseudotuberculosis serotype O:1b (strain IP 31758).